The following is a 764-amino-acid chain: Complement factor B (764 aa).

An N-terminal signal peptide occupies residues 1–25 (MGSNLSPQLCLMPFILGLLSGGVTT). Sushi domains follow at residues 35–100 (GSCS…ECRA), 101–160 (IHCP…ICDN), and 163–220 (GYCS…SCQD). Intrachain disulfides connect Cys37/Cys76, Cys62/Cys98, Cys103/Cys145, Cys131/Cys158, Cys165/Cys205, and Cys191/Cys218. 2 N-linked (GlcNAc...) asparagine glycosylation sites follow: Asn122 and Asn142. Residues 270–469 (NIYLVLDGSD…NLEDVFYQMI (200 aa)) form the VWFA domain. Residues Ser278 and Ser280 each coordinate Mg(2+). The Mn(2+) site is built by Ser278 and Ser280. Asn285 carries an N-linked (GlcNAc...) asparagine glycan. Residue Lys291 is glycosylated (N-linked (Glc) (glycation) lysine). Thr353 contacts Mg(2+). Thr353 contacts Mn(2+). A glycan (N-linked (GlcNAc...) asparagine) is linked at Asn378. The 281-residue stretch at 477–757 (LCGMVWEHRK…VLPWLKEKLQ (281 aa)) folds into the Peptidase S1 domain. Disulfide bonds link Cys478–Cys596, Cys511–Cys527, Cys599–Cys615, Cys656–Cys682, and Cys695–Cys725. Residues His526 and Asp576 each act as charge relay system in the active site. Ser699 serves as the catalytic Charge relay system.

This sequence belongs to the peptidase S1 family. In terms of assembly, monomer. Interacts with complement C3b; this interaction is dependent on the presence of Mg(2+). Catalytic component of the C3 convertase of the alternative complement pathway, also named C3bBb, composed of complement factor B Bb and complement C3b. Catalytic component of the C5 convertase of the alternative complement pathway, also named C3bBb3b, composed of complement factor B Bb and additional molecules of complement C3b. Interacts to CFP; this interaction contributes to the stabilization of the active C3-convertase enzyme complex. Mg(2+) serves as cofactor. It depends on Mn(2+) as a cofactor. Cleaved by CFD following activation of the alternative complement system, generating Ba and Bb chains. Cleavage and activation takes place when CFB is already associated with complement C3b.

The protein localises to the secreted. It is found in the cell surface. It carries out the reaction Cleavage of Arg-|-Ser bond in complement component C3 alpha-chain to yield C3a and C3b, and Arg-|-Xaa bond in complement component C5 alpha-chain to yield C5a and C5b.. Functionally, precursor of the catalytic component of the C3 and C5 convertase complexes of the alternative pathway of the complement system, a cascade of proteins that leads to phagocytosis and breakdown of pathogens and signaling that strengthens the adaptive immune system. The alternative complement pathway acts as an amplification loop that enhances other complement pathways (classical, lectin and GZMK) by promoting formation of additional C3 and C5 convertases. CFB is cleaved and activated by CFD to generate Ba and Bb chains; Bb chain constituting the catalytic component of the C3 and C5 convertases. Serine protease component of the complement C3 and C5 convertase complexes of the alternative complement pathway. Following cleavage and activation by factor D (CFD), forms the C3 convertase together with complement C3b. As part of the C3 convertase, cleaves and activates C3 into C3a anaphylatoxin and C3b opsonin, the next components of the complement pathways. When an additional complement C3b molecule binds to the C3 convertase, forms the C5 convertase, which cleaves and activates C5 into C5a anaphylatoxin and C5b component of the membrane attack complex. Its function is as follows. Involved in proliferation and differentiation of preactivated B-lymphocytes, rapid spreading of peripheral blood monocytes, stimulation of lymphocyte blastogenesis and lysis of erythrocytes. The sequence is that of Complement factor B from Homo sapiens (Human).